Consider the following 286-residue polypeptide: Shikimate dehydrogenase (NADP(+)) (286 aa).

Residues Ser19 to Ser21 and Thr66 contribute to the shikimate site. The active-site Proton acceptor is the Lys70. Residues Asn91 and Asp107 each coordinate shikimate. NADP(+) contacts are provided by residues Gly129–Ala133 and Leu229. Position 231 (Tyr231) interacts with shikimate. NADP(+) is bound at residue Gly252.

It belongs to the shikimate dehydrogenase family. Homodimer.

It carries out the reaction shikimate + NADP(+) = 3-dehydroshikimate + NADPH + H(+). The protein operates within metabolic intermediate biosynthesis; chorismate biosynthesis; chorismate from D-erythrose 4-phosphate and phosphoenolpyruvate: step 4/7. Involved in the biosynthesis of the chorismate, which leads to the biosynthesis of aromatic amino acids. Catalyzes the reversible NADPH linked reduction of 3-dehydroshikimate (DHSA) to yield shikimate (SA). This is Shikimate dehydrogenase (NADP(+)) from Prochlorococcus marinus (strain AS9601).